Here is a 122-residue protein sequence, read N- to C-terminus: Large ribosomal subunit protein uL14 (122 aa).

This sequence belongs to the universal ribosomal protein uL14 family. Part of the 50S ribosomal subunit. Forms a cluster with proteins L3 and L19. In the 70S ribosome, L14 and L19 interact and together make contacts with the 16S rRNA in bridges B5 and B8.

Binds to 23S rRNA. Forms part of two intersubunit bridges in the 70S ribosome. This chain is Large ribosomal subunit protein uL14, found in Acinetobacter baumannii (strain SDF).